A 178-amino-acid chain; its full sequence is Inorganic pyrophosphatase (178 aa).

Lys30, Arg44, and Tyr56 together coordinate substrate. Asp66, Asp71, and Asp103 together coordinate Mg(2+). Tyr140 contributes to the substrate binding site.

It belongs to the PPase family. In terms of assembly, homohexamer. The cofactor is Mg(2+).

It localises to the cytoplasm. The enzyme catalyses diphosphate + H2O = 2 phosphate + H(+). Catalyzes the hydrolysis of inorganic pyrophosphate (PPi) forming two phosphate ions. The protein is Inorganic pyrophosphatase of Pyrococcus abyssi (strain GE5 / Orsay).